A 372-amino-acid chain; its full sequence is Non-structural protein NS2 (372 aa).

The segment at 259–326 (NQIEKQHTTH…QESEPESPSF (68 aa)) is disordered. The span at 299-309 (TETTSTSSSHH) shows a compositional bias: low complexity.

This chain is Non-structural protein NS2 (NS), found in Aedes albopictus (Asian tiger mosquito).